The sequence spans 166 residues: Small ribosomal subunit protein uS5 (166 aa).

The region spanning 11-74 (LQEKLISVNR…DKARKNMIII (64 aa)) is the S5 DRBM domain.

This sequence belongs to the universal ribosomal protein uS5 family. In terms of assembly, part of the 30S ribosomal subunit. Contacts proteins S4 and S8.

In terms of biological role, with S4 and S12 plays an important role in translational accuracy. Its function is as follows. Located at the back of the 30S subunit body where it stabilizes the conformation of the head with respect to the body. The chain is Small ribosomal subunit protein uS5 from Wigglesworthia glossinidia brevipalpis.